The chain runs to 355 residues: Elongation factor Ts (355 aa).

An involved in Mg(2+) ion dislocation from EF-Tu region spans residues 82-85; it reads TDFV.

The protein belongs to the EF-Ts family.

The protein resides in the cytoplasm. Associates with the EF-Tu.GDP complex and induces the exchange of GDP to GTP. It remains bound to the aminoacyl-tRNA.EF-Tu.GTP complex up to the GTP hydrolysis stage on the ribosome. The sequence is that of Elongation factor Ts (tsf) from Helicobacter pylori (strain ATCC 700392 / 26695) (Campylobacter pylori).